A 368-amino-acid chain; its full sequence is Polynucleotide 5'-hydroxyl-kinase NOL9 (368 aa).

Residue 36-43 coordinates ATP; the sequence is GPKNSGKS.

Belongs to the Clp1 family. NOL9/GRC3 subfamily.

The protein localises to the nucleus. It localises to the nucleolus. Polynucleotide 5'-kinase involved in rRNA processing. This is Polynucleotide 5'-hydroxyl-kinase NOL9 from Arabidopsis thaliana (Mouse-ear cress).